Consider the following 263-residue polypeptide: MRRRAPGETVAPYRHRGDRRHLTALAKRLAAWLRASMPDLERAEPDMPLEDRAADTWEPLIIVADHAGGDWPTRARNAAVDLLAEAADNDQGSLRTRLLVDCRTAFGDHPTLSTTELLRQLNSDPEAPWPTYGKTGLNAAKLSKLLAEFDIRSANVRFPDGTQAKGYQRAHFFDAWTRYCPDAPHDRPEGVPSQPSQASHRRSERDGLTLWDGISRPNDEPDPDLWDGTSRPTAPSRPSLTCIGTAGTAGTDTPPSTNTKGAA.

The interval 183 to 263 is disordered; the sequence is APHDRPEGVP…PPSTNTKGAA (81 aa). 2 stretches are compositionally biased toward polar residues: residues 230–239 and 253–263; these read SRPTAPSRPS and TPPSTNTKGAA.

In terms of biological role, probably does not play a direct role in plasmid integration or excision. This is an uncharacterized protein from Saccharopolyspora erythraea (Streptomyces erythraeus).